A 519-amino-acid chain; its full sequence is GMP synthase [glutamine-hydrolyzing] (519 aa).

Residues 4–201 (AILILDFGSQ…VHDICDAGYD (198 aa)) form the Glutamine amidotransferase type-1 domain. Residue Cys81 is the Nucleophile of the active site. Catalysis depends on residues His175 and Glu177. The GMPS ATP-PPase domain occupies 202–394 (WNMPDYVEEA…LGLPRDLVFR (193 aa)). 229 to 235 (SGGVDSS) provides a ligand contact to ATP.

Homodimer.

The enzyme catalyses XMP + L-glutamine + ATP + H2O = GMP + L-glutamate + AMP + diphosphate + 2 H(+). It functions in the pathway purine metabolism; GMP biosynthesis; GMP from XMP (L-Gln route): step 1/1. Its function is as follows. Catalyzes the synthesis of GMP from XMP. This is GMP synthase [glutamine-hydrolyzing] from Nitrosomonas eutropha (strain DSM 101675 / C91 / Nm57).